The chain runs to 410 residues: Elongation factor Tu (410 aa).

Residues 10 to 219 form the tr-type G domain; that stretch reads KTHVNVGTIG…ALDTYIPDPV (210 aa). Residues 19–26, 88–92, and 143–146 contribute to the GTP site; these read GHVDHGKT, DCPGH, and NKCD. Threonine 26 provides a ligand contact to Mg(2+).

This sequence belongs to the TRAFAC class translation factor GTPase superfamily. Classic translation factor GTPase family. EF-Tu/EF-1A subfamily. Monomer.

It localises to the cytoplasm. The catalysed reaction is GTP + H2O = GDP + phosphate + H(+). Functionally, GTP hydrolase that promotes the GTP-dependent binding of aminoacyl-tRNA to the A-site of ribosomes during protein biosynthesis. The protein is Elongation factor Tu of Brachyspira hyodysenteriae (Treponema hyodysenteriae).